The sequence spans 236 residues: 2,3,4,5-tetrahydropyridine-2,6-dicarboxylate N-acetyltransferase (236 aa).

It belongs to the transferase hexapeptide repeat family. DapH subfamily.

It carries out the reaction (S)-2,3,4,5-tetrahydrodipicolinate + acetyl-CoA + H2O = L-2-acetamido-6-oxoheptanedioate + CoA. It functions in the pathway amino-acid biosynthesis; L-lysine biosynthesis via DAP pathway; LL-2,6-diaminopimelate from (S)-tetrahydrodipicolinate (acetylase route): step 1/3. Its function is as follows. Catalyzes the transfer of an acetyl group from acetyl-CoA to tetrahydrodipicolinate. This is 2,3,4,5-tetrahydropyridine-2,6-dicarboxylate N-acetyltransferase from Clostridium botulinum (strain Kyoto / Type A2).